Consider the following 282-residue polypeptide: Polyamine aminopropyltransferase (282 aa).

In terms of domain architecture, PABS spans 11–239 (IEWYPRGYGV…SPWSFLVGVK (229 aa)). An S-methyl-5'-thioadenosine-binding site is contributed by Gln-36. His-67 and Asp-91 together coordinate spermidine. S-methyl-5'-thioadenosine contacts are provided by residues Glu-111 and 142–143 (DG). Asp-160 functions as the Proton acceptor in the catalytic mechanism. 160 to 163 (DSTD) is a spermidine binding site. Pro-167 contacts S-methyl-5'-thioadenosine.

Belongs to the spermidine/spermine synthase family. Homodimer or homotetramer.

Its subcellular location is the cytoplasm. It catalyses the reaction S-adenosyl 3-(methylsulfanyl)propylamine + putrescine = S-methyl-5'-thioadenosine + spermidine + H(+). It participates in amine and polyamine biosynthesis; spermidine biosynthesis; spermidine from putrescine: step 1/1. Catalyzes the irreversible transfer of a propylamine group from the amino donor S-adenosylmethioninamine (decarboxy-AdoMet) to putrescine (1,4-diaminobutane) to yield spermidine. This chain is Polyamine aminopropyltransferase, found in Thermococcus onnurineus (strain NA1).